Reading from the N-terminus, the 429-residue chain is Enolase (429 aa).

Glutamine 162 lines the (2R)-2-phosphoglycerate pocket. The Proton donor role is filled by glutamate 204. Mg(2+) contacts are provided by aspartate 241, glutamate 283, and aspartate 310. Residues lysine 335, arginine 364, serine 365, and lysine 386 each coordinate (2R)-2-phosphoglycerate. Catalysis depends on lysine 335, which acts as the Proton acceptor.

This sequence belongs to the enolase family. The cofactor is Mg(2+).

The protein localises to the cytoplasm. It is found in the secreted. Its subcellular location is the cell surface. It carries out the reaction (2R)-2-phosphoglycerate = phosphoenolpyruvate + H2O. It participates in carbohydrate degradation; glycolysis; pyruvate from D-glyceraldehyde 3-phosphate: step 4/5. Its function is as follows. Catalyzes the reversible conversion of 2-phosphoglycerate (2-PG) into phosphoenolpyruvate (PEP). It is essential for the degradation of carbohydrates via glycolysis. This is Enolase from Mycobacterium bovis (strain BCG / Pasteur 1173P2).